The chain runs to 572 residues: Methionine--tRNA ligase (572 aa).

The short motif at 11–21 (PYINGIKHLGN) is the 'HIGH' region element. Residues Cys143, Cys146, Cys156, and Cys159 each coordinate Zn(2+). Positions 346 to 350 (QFSTS) match the 'KMSKS' region motif. Thr349 lines the ATP pocket.

The protein belongs to the class-I aminoacyl-tRNA synthetase family. MetG type 1 subfamily. Monomer. Requires Zn(2+) as cofactor.

It localises to the cytoplasm. It catalyses the reaction tRNA(Met) + L-methionine + ATP = L-methionyl-tRNA(Met) + AMP + diphosphate. In terms of biological role, is required not only for elongation of protein synthesis but also for the initiation of all mRNA translation through initiator tRNA(fMet) aminoacylation. In Cereibacter sphaeroides (strain ATCC 17025 / ATH 2.4.3) (Rhodobacter sphaeroides), this protein is Methionine--tRNA ligase.